The primary structure comprises 194 residues: Protein LKAAEAR1 (194 aa).

The tract at residues 1-45 is disordered; that stretch reads MPPPAKEGGRKGPRERSGKSAPGTAQGEERAKGAPATEPPKPGWA. Positions 7–18 are enriched in basic and acidic residues; the sequence is EGGRKGPRERSG.

This Homo sapiens (Human) protein is Protein LKAAEAR1 (LKAAEAR1).